A 208-amino-acid polypeptide reads, in one-letter code: Small ribosomal subunit protein uS4 (208 aa).

The interval 31-51 (SALDKRAYGPGQHGQRRAKTS) is disordered. An S4 RNA-binding domain is found at 98 to 156 (RRLDNVVYRMGFATTRSSARQLVTHGHVLVDGKRLDIPSYFVRSGQKIEIKEKTKSNPQ).

Belongs to the universal ribosomal protein uS4 family. As to quaternary structure, part of the 30S ribosomal subunit. Contacts protein S5. The interaction surface between S4 and S5 is involved in control of translational fidelity.

In terms of biological role, one of the primary rRNA binding proteins, it binds directly to 16S rRNA where it nucleates assembly of the body of the 30S subunit. Its function is as follows. With S5 and S12 plays an important role in translational accuracy. This Helicobacter pylori (strain HPAG1) protein is Small ribosomal subunit protein uS4.